The chain runs to 178 residues: Large ribosomal subunit protein uL6 (178 aa).

Belongs to the universal ribosomal protein uL6 family. In terms of assembly, part of the 50S ribosomal subunit.

Functionally, this protein binds to the 23S rRNA, and is important in its secondary structure. It is located near the subunit interface in the base of the L7/L12 stalk, and near the tRNA binding site of the peptidyltransferase center. The protein is Large ribosomal subunit protein uL6 of Clavibacter sepedonicus (Clavibacter michiganensis subsp. sepedonicus).